A 249-amino-acid chain; its full sequence is Anti-H(O) lectin 2 (249 aa).

A glycan (N-linked (GlcNAc...) asparagine) is linked at N118. 2 residues coordinate Mn(2+): E130 and D132. Ca(2+) contacts are provided by D132, Y134, N140, and D145. Mn(2+) is bound by residues D145 and H148. N245 carries N-linked (GlcNAc...) asparagine glycosylation.

Belongs to the leguminous lectin family.

Its function is as follows. Di-N-acetylchitobiose specific lectin. This is Anti-H(O) lectin 2 from Ulex europaeus (Furze).